Here is a 315-residue protein sequence, read N- to C-terminus: THO complex subunit 3 (315 aa).

WD repeat units follow at residues 18–57 (GHKK…HSKA), 64–104 (GHTD…CTQQ), 106–145 (ELSG…PLHR), 189–228 (AHTA…CLRT), 231–270 (KLEW…TVHQ), and 272–311 (PCRA…RIFG).

This sequence belongs to the THOC3 family. As to quaternary structure, component of the THO complex, which is composed of THO1, THO2, THO3, THO5, THO6 and THO7.

Its subcellular location is the nucleus. Acts as a component of the THO subcomplex of the TREX complex which is thought to couple mRNA transcription, processing and nuclear export. Contributes to the integrity of the endogenous trans-acting small interfering RNA (ta-siRNA) pathway. May process or transport a long RNA molecule so that it can be a template for secondary siRNA production. May participate in the trafficking of siRNA precursors to the ARGONAUTE catalytic center. Required for the generation of functional messenger ribonucleoproteins (mRNPs). The polypeptide is THO complex subunit 3 (THO3) (Arabidopsis thaliana (Mouse-ear cress)).